A 566-amino-acid chain; its full sequence is Mucolipin-2 (566 aa).

The Cytoplasmic portion of the chain corresponds to 1 to 65; it reads MPGDEETLDL…YRARRQIPWK (65 aa). A helical membrane pass occupies residues 66-86; sequence LGLQILKIVMVTTQLVRFGLS. Residues 87 to 288 lie on the Extracellular side of the membrane; sequence NQLVVAFKED…ISGSTQRSTH (202 aa). The segment at 107-123 is extracellular/lumenal pore loop; it reads KGFSGVDEDDYSCSIYT. 2 disulfides stabilise this stretch: cysteine 164–cysteine 190 and cysteine 243–cysteine 274. A helical membrane pass occupies residues 289 to 309; sequence YLLVFDVFVIMICLASLILCT. The Cytoplasmic portion of the chain corresponds to 310 to 346; sequence RSIVLALRLRKRFLNFFLEKYKQRVCGADQWEFVNGW. Residues 347 to 367 traverse the membrane as a helical segment; it reads YVLVTISDLMTIIGSILKMEI. Topologically, residues 368 to 376 are extracellular; that stretch reads KAKKLTNYD. The chain crosses the membrane as a helical span at residues 377–397; it reads VCSILLGTSTLFVWVGVIRYL. The Cytoplasmic segment spans residues 398 to 419; sequence GYFQTYNVLILTMQASLPKVLR. The helical transmembrane segment at 420–440 threads the bilayer; it reads FCACAGMIYLGYTFCGWIVLG. Residues 441–448 are Extracellular-facing; the sequence is PYHEKFEN. Residues 449–469 constitute an intramembrane region (pore-forming); the sequence is LNIVAECLFSLVNGDDMFATF. The short motif at 461–464 is the Selectivity filter element; that stretch reads NGDD. Over 470–480 the chain is Extracellular; sequence AQIQQKSILVW. The helical transmembrane segment at 481-502 threads the bilayer; it reads LFSRLYLYSFISLFIYMVLSLF. At 503–566 the chain is on the cytoplasmic side; sequence IALITDSYHT…RSNDHLILID (64 aa).

It belongs to the transient receptor (TC 1.A.4) family. Polycystin subfamily. MCOLN2 sub-subfamily. As to quaternary structure, forms homooligomeric complexes; probably tetrameric. Can heterooligomerize with MCOLN1; heteromeric assemblies have different channel properties as compared to the respective homooligomers and may be tissue-specific. Interacts with TMEM176A. As to expression, expressed in activated macrophages and microglia (at protein level). Isoform 1 is widely expressed at very low levels. In terms of tissue distribution, isoform 2 is expressed at high levels in lymphoid tissues (thymus and spleen) and kidney, and at moderate levels in heart, lung, liver and stomach.

Its subcellular location is the cell membrane. The protein resides in the lysosome membrane. It localises to the recycling endosome membrane. It catalyses the reaction Ca(2+)(in) = Ca(2+)(out). The catalysed reaction is Fe(2+)(in) = Fe(2+)(out). Its activity is regulated as follows. Fe(2+) channel activity is potentiated by low pH. Nonselective cation channel probably playing a role in the regulation of membrane trafficking events. Acts as a Ca(2+)-permeable cation channel with inwardly rectifying activity. May activate ARF6 and be involved in the trafficking of GPI-anchored cargo proteins to the cell surface via the ARF6-regulated recycling pathway. May play a role in immune processes. In adaptive immunity, TRPML2 and TRPML1 may play redundant roles in the function of the specialized lysosomes of B cells. In the innate immune response, may play a role in the regulation of chemokine secretion and macrophage migration. Through a possible and probably tissue-specific heteromerization with MCOLN1 may be at least in part involved in many lysosome-dependent cellular events. Also functions as a Fe(2+) permeable channel. The protein is Mucolipin-2 (Mcoln2) of Mus musculus (Mouse).